We begin with the raw amino-acid sequence, 398 residues long: Acetate kinase (398 aa).

Residue Asn-8 participates in Mg(2+) binding. Residue Lys-15 coordinates ATP. Arg-89 provides a ligand contact to substrate. Catalysis depends on Asp-146, which acts as the Proton donor/acceptor. ATP is bound by residues 206-210 (HIGNG), 281-283 (DLR), and 329-333 (GVGEN). Mg(2+) is bound at residue Glu-383.

The protein belongs to the acetokinase family. In terms of assembly, homodimer. Mg(2+) is required as a cofactor. It depends on Mn(2+) as a cofactor.

It localises to the cytoplasm. It catalyses the reaction acetate + ATP = acetyl phosphate + ADP. Its pathway is metabolic intermediate biosynthesis; acetyl-CoA biosynthesis; acetyl-CoA from acetate: step 1/2. Its function is as follows. Catalyzes the formation of acetyl phosphate from acetate and ATP. Can also catalyze the reverse reaction. The chain is Acetate kinase from Macrococcus caseolyticus (strain JCSC5402) (Macrococcoides caseolyticum).